We begin with the raw amino-acid sequence, 432 residues long: Glial fibrillary acidic protein (432 aa).

The head stretch occupies residues methionine 1 to glutamate 72. Threonine 7 carries the post-translational modification Phosphothreonine; by AURKB and ROCK1. Arginine 12 is modified (omega-N-methylarginine). Position 13 is a phosphoserine; by AURKB and ROCK1 (serine 13). Arginine 30 and arginine 36 each carry citrulline. Serine 38 carries the post-translational modification Phosphoserine; by AURKB and ROCK1. One can recognise an IF rod domain in the interval glutamate 69–isoleucine 377. The tract at residues methionine 73–leucine 104 is coil 1A. The residue at position 82 (serine 82) is a Phosphoserine. Residues arginine 105–valine 115 form a linker 1 region. Threonine 110 and threonine 150 each carry phosphothreonine. The interval tyrosine 116 to glutamine 214 is coil 1B. A linker 12 region spans residues leucine 215–aspartate 230. Residues leucine 231–glutamate 252 are coil 2A. The segment at alanine 253–tryptophan 256 is linker 2. The tract at residues tyrosine 257–isoleucine 377 is coil 2B. Arginine 270 is subject to Citrulline. Serine 323 bears the Phosphoserine mark. Residues threonine 378 to methionine 432 form a tail region. Position 383 is a phosphothreonine (threonine 383). Phosphoserine is present on serine 385. Citrulline occurs at positions 406 and 416.

This sequence belongs to the intermediate filament family. As to quaternary structure, interacts with SYNM. Phosphorylated by PKN1.

The protein resides in the cytoplasm. Its function is as follows. GFAP, a class-III intermediate filament, is a cell-specific marker that, during the development of the central nervous system, distinguishes astrocytes from other glial cells. This chain is Glial fibrillary acidic protein (GFAP), found in Pongo abelii (Sumatran orangutan).